Consider the following 2168-residue polypeptide: Bromodomain adjacent to zinc finger domain protein 2B (2168 aa).

Disordered regions lie at residues 1 to 29 (MESG…ASVV), 140 to 348 (FAPP…KQPQ), 409 to 428 (LKAG…SELR), 459 to 479 (SNPK…ENNH), 528 to 698 (STPF…LHIA), 719 to 740 (GTSS…RRVT), 841 to 872 (MEGR…PPNV), and 1021 to 1043 (RKKA…LNKE). Over residues 8 to 29 (PSSAASSTTPTSSSTPSVASVV) the composition is skewed to low complexity. Composition is skewed to polar residues over residues 146 to 163 (NHDS…SNRN) and 171 to 193 (GSIN…STTA). Composition is skewed to low complexity over residues 194 to 204 (SSSMGQTKSTS) and 240 to 263 (ESSS…ISSS). The segment covering 264–291 (DSDDLEEDEEEEDQSIEESEDDDSDSES) has biased composition (acidic residues). Residues 307–325 (SDPKADGQKATEKAQEKRI) show a composition bias toward basic and acidic residues. Residues 335-348 (SQTHSFQSQQKQPQ) show a composition bias toward low complexity. Composition is skewed to polar residues over residues 461–479 (PKAT…ENNH) and 528–551 (STPF…QTPV). Over residues 592–605 (RGTDSDIPSSKDSE) the composition is skewed to basic and acidic residues. Over residues 606–663 (DSNEDEEEDDEEEDEEDDEDDESDDSQSESDSNSESDTEGSEEEDDDDKDQDESDSDT) the composition is skewed to acidic residues. The segment covering 670-693 (MKLNKTTSSVKSPSMSLTGHSTPR) has biased composition (polar residues). The span at 720-732 (TSSSTLTSSPHSG) shows a compositional bias: low complexity. The 72-residue stretch at 739-810 (VTDERELRIP…DNFSFSAKIR (72 aa)) folds into the MBD domain. Basic and acidic residues predominate over residues 841-861 (MEGRRGRPPNPDRQRAREESR). Residues 883 to 1061 (AKLLRKLQAQ…ELEMAKELKK (179 aa)) adopt a coiled-coil conformation. The 66-residue stretch at 1087–1152 (GSTFSDCLMV…LSAAVCDPGL (66 aa)) folds into the DDT domain. The segment at 1265-1341 (KRDTSGGIDL…CEDEDEGDQA (77 aa)) is disordered. The segment covering 1297-1321 (SDYDDDDDDDSDDQGDEDDEDEEDK) has biased composition (acidic residues). Over residues 1322–1331 (EDKKGKKTDI) the composition is skewed to basic and acidic residues. A coiled-coil region spans residues 1334-1375 (DEDEGDQAASVEELEKQIEKLSKQQSQYRRKLFDASHSLRSV). A Glycyl lysine isopeptide (Lys-Gly) (interchain with G-Cter in SUMO2) cross-link involves residue Lys-1425. Lys-1462 carries the N6-acetyllysine modification. Phosphoserine is present on residues Ser-1465 and Ser-1467. The segment covering 1503 to 1533 (SGKHSLGSVQSTATQSNVEKADSNNLFNTGS) has biased composition (polar residues). Disordered stretches follow at residues 1503 to 1542 (SGKH…FYSP), 1582 to 1607 (SLVT…SSAQ), and 1670 to 1694 (TSNV…AQPA). The span at 1588-1600 (SQPPSKSPSPTPA) shows a compositional bias: pro residues. Residues 1670–1692 (TSNVASSKSESPVPQNEKATSAQ) are compositionally biased toward polar residues. Ser-1680 bears the Phosphoserine mark. The PHD-type zinc-finger motif lies at 1931 to 1981 (KVYCQICRKGDNEELLLLCDGCDKGCHTYCHRPKITTIPDGDWFCPACIAK). The disordered stretch occupies residues 1998–2040 (KTNESKKGKKVTLTGDTEDEDSASTSSSLKRGNKDLKKRKMEE). The residue at position 2014 (Thr-2014) is a Phosphothreonine. The residue at position 2019 (Ser-2019) is a Phosphoserine. Residues 2029-2040 (GNKDLKKRKMEE) are compositionally biased toward basic and acidic residues. Residues 2060–2164 (RDDSKDLALC…KYFEKKWTDT (105 aa)) form the Bromo domain.

Belongs to the WAL family. As to quaternary structure, component of the BRF-1 ISWI chromatin remodeling complex, at least composed of SMARCA1 and BAZ2B, which regulates the spacing of histone octamers on the DNA template to facilitate access to DNA. Within the BRF-1 ISWI chromatin remodeling complex interacts with SMARCA1; the interaction is direct. Component of the BRF-5 ISWI chromatin remodeling complex, at least composed of SMARCA5/SNF2H and BAZ2B, which regulates the spacing of histone octamers on the DNA template to facilitate access to DNA. Within the BRF-5 ISWI chromatin remodeling complex interacts with SMARCA5/SNF2H; the interaction is direct. Interacts with acetylated lysine residues on histone H1.4, H2A, H2B, H3 and H4 (in vitro). Interacts with EHMT1. Expressed at varying levels in several tissues, whereas a smaller transcript was expressed specifically in testis.

It localises to the nucleus. Regulatory subunit of the ATP-dependent BRF-1 and BRF-5 ISWI chromatin remodeling complexes, which form ordered nucleosome arrays on chromatin and facilitate access to DNA during DNA-templated processes such as DNA replication, transcription, and repair. Both complexes regulate the spacing of nucleosomes along the chromatin and have the ability to slide mononucleosomes to the center of a DNA template. The BRF-1 ISWI chromatin remodeling complex has a lower ATP hydrolysis rate than the BRF-5 ISWI chromatin remodeling complex. Chromatin reader protein, which may play a role in transcriptional regulation via interaction with ISWI. Involved in positively modulating the rate of age-related behavioral deterioration. Represses the expression of mitochondrial function-related genes, perhaps by occupying their promoter regions, working in concert with histone methyltransferase EHMT1. The sequence is that of Bromodomain adjacent to zinc finger domain protein 2B (BAZ2B) from Homo sapiens (Human).